We begin with the raw amino-acid sequence, 47 residues long: ATP-dependent zinc metalloprotease FTSH, chloroplastic (47 aa).

The protein in the N-terminal section; belongs to the AAA ATPase family. In the C-terminal section; belongs to the peptidase M41 family. Requires Zn(2+) as cofactor.

It localises to the plastid. The protein localises to the chloroplast membrane. Functionally, seems to act as an ATP-dependent zinc metallopeptidase. This Populus euphratica (Euphrates poplar) protein is ATP-dependent zinc metalloprotease FTSH, chloroplastic.